The sequence spans 450 residues: Phosphoglucosamine mutase (450 aa).

Catalysis depends on Ser-101, which acts as the Phosphoserine intermediate. Residues Ser-101, Asp-240, Asp-242, and Asp-244 each coordinate Mg(2+). The residue at position 101 (Ser-101) is a Phosphoserine.

This sequence belongs to the phosphohexose mutase family. Requires Mg(2+) as cofactor. Activated by phosphorylation.

It carries out the reaction alpha-D-glucosamine 1-phosphate = D-glucosamine 6-phosphate. Functionally, catalyzes the conversion of glucosamine-6-phosphate to glucosamine-1-phosphate. This chain is Phosphoglucosamine mutase, found in Streptococcus agalactiae serotype Ia (strain ATCC 27591 / A909 / CDC SS700).